A 303-amino-acid chain; its full sequence is MSLKNEKIAVLFGGVSAEREISLNSGKSVFEALQSLGYNVEAIDTKEFPIEKLKEKGIQRVFNILHGGIGENGVLQGALEQLGIPYTGCGVMASAITLDKFRTKLLWNAVGLPTAAMEVVRRGQAVNSDEIIAKLGLPLFVKPASEGSSVGVSKVKTAEQLLPAIEEALKYDSIVLVEENLAGAEYSVPVLDGEVLPAVQIIPDGEFYDYHAKYISDNTQYVVPALNADRQAEVAKLVKQAYDVVGCRGWSRIDVMEDGEGNFRLVEVNTCPGMTSHSIFPKSAATVGYSFERLVERVLELSA.

The region spanning 104 to 300 (KLLWNAVGLP…FERLVERVLE (197 aa)) is the ATP-grasp domain. 132–187 (IAKLGLPLFVKPASEGSSVGVSKVKTAEQLLPAIEEALKYDSIVLVEENLAGAEYS) contributes to the ATP binding site. Mg(2+) contacts are provided by aspartate 254, glutamate 267, and asparagine 269.

Belongs to the D-alanine--D-alanine ligase family. Requires Mg(2+) as cofactor. Mn(2+) serves as cofactor.

The protein resides in the cytoplasm. It catalyses the reaction 2 D-alanine + ATP = D-alanyl-D-alanine + ADP + phosphate + H(+). Its pathway is cell wall biogenesis; peptidoglycan biosynthesis. Functionally, cell wall formation. The polypeptide is D-alanine--D-alanine ligase (Glaesserella parasuis serovar 5 (strain SH0165) (Haemophilus parasuis)).